The chain runs to 382 residues: MTEQRPLTIALVAGETSGDILGAGLIRALKERVPNARFVGVAGPRMQAEGCEAWYEMEELAVMGIVEVLGRLRRLLHIRADLTKRFGELKPDVFVGIDAPDFNITLEGNLKKQGIKTIHYVSPSVWAWRQKRVFKIGRATDLVLAFLPFEKAFYDKYNVPCRFIGHTMADAMPLDPDKNGARDVLGIPYDAHCLALLPGSRGAEVEMLSADFLKTAQLLRQTYPDLEIVVPLVNAKRREQFERIKAEVAPDLSVHLLDGMGREAMVASDAALLASGTAALECMLAKCPMVVGYRMKPFTFWLAKRLVKTDYVSLPNLLAGRELVKELLQEECEPQKLAAALLPLLANGKTSHAMHDTFRELHQQIRCNADEQAAQAVLELAQ.

Belongs to the LpxB family.

It carries out the reaction 2-N,3-O-bis[(3R)-3-hydroxytetradecanoyl]-alpha-D-glucosaminyl 1-phosphate + UDP-2-N,3-O-bis[(3R)-3-hydroxytetradecanoyl]-alpha-D-glucosamine = lipid A disaccharide (E. coli) + UDP + H(+). The catalysed reaction is a lipid X + a UDP-2-N,3-O-bis[(3R)-3-hydroxyacyl]-alpha-D-glucosamine = a lipid A disaccharide + UDP + H(+). It participates in glycolipid biosynthesis; lipid IV(A) biosynthesis; lipid IV(A) from (3R)-3-hydroxytetradecanoyl-[acyl-carrier-protein] and UDP-N-acetyl-alpha-D-glucosamine: step 5/6. Functionally, condensation of UDP-2,3-diacylglucosamine and 2,3-diacylglucosamine-1-phosphate to form lipid A disaccharide, a precursor of lipid A, a phosphorylated glycolipid that anchors the lipopolysaccharide to the outer membrane of the cell. This chain is Lipid-A-disaccharide synthase, found in Escherichia coli (strain ATCC 8739 / DSM 1576 / NBRC 3972 / NCIMB 8545 / WDCM 00012 / Crooks).